Here is a 119-residue protein sequence, read N- to C-terminus: Large ribosomal subunit protein bL19 (119 aa).

Belongs to the bacterial ribosomal protein bL19 family.

Its function is as follows. This protein is located at the 30S-50S ribosomal subunit interface and may play a role in the structure and function of the aminoacyl-tRNA binding site. This is Large ribosomal subunit protein bL19 from Leuconostoc mesenteroides subsp. mesenteroides (strain ATCC 8293 / DSM 20343 / BCRC 11652 / CCM 1803 / JCM 6124 / NCDO 523 / NBRC 100496 / NCIMB 8023 / NCTC 12954 / NRRL B-1118 / 37Y).